The sequence spans 437 residues: Triacylglycerol lipase (437 aa).

In terms of domain architecture, PE spans 1 to 100; sequence MVSYVVALPE…AELANASLLQ (100 aa). A linker region spans residues 101–206; the sequence is SEFASGIGNG…GNSPPPLLNS (106 aa). The lipase stretch occupies residues 207 to 437; it reads LLGQTVQYTT…QINQQLGIAA (231 aa). The Involved in the stabilization of the negatively charged intermediate by the formation of the oxyanion hole motif lies at 239 to 241; that stretch reads HGG. Catalysis depends on residues S309, D383, and H413.

This sequence in the N-terminal section; belongs to the mycobacterial PE family. PGRS subfamily. It in the C-terminal section; belongs to the 'GDXG' lipolytic enzyme family. In terms of assembly, forms aggregates via its PE domain. Upon export, the PE domain is removed by proteolytic cleavage. Cleavage occurs at the cell surface and is not required for secretion. Cleaved after Gly-149 by the aspartic protease PecA. May also be cleaved before Leu-98 and after Ala-136.

Its subcellular location is the cytoplasm. The protein localises to the secreted. It is found in the cell wall. The protein resides in the cell surface. It catalyses the reaction a triacylglycerol + H2O = a diacylglycerol + a fatty acid + H(+). The catalysed reaction is 1,2,3-tri-(9Z-octadecenoyl)-glycerol + H2O = di-(9Z)-octadecenoylglycerol + (9Z)-octadecenoate + H(+). It carries out the reaction an acetyl ester + H2O = an aliphatic alcohol + acetate + H(+). The enzyme catalyses a butanoate ester + H2O = an aliphatic alcohol + butanoate + H(+). It catalyses the reaction a hexanoate ester + H2O = an aliphatic alcohol + hexanoate + H(+). The catalysed reaction is an octanoate ester + H2O = an aliphatic alcohol + octanoate + H(+). It carries out the reaction a dodecanoate ester + H2O = an aliphatic alcohol + dodecanoate + H(+). The enzyme catalyses a tetradecanoate ester + H2O = an aliphatic alcohol + tetradecanoate + H(+). It catalyses the reaction hexadecanoate ester + H2O = an aliphatic alcohol + hexadecanoate + H(+). The catalysed reaction is octadecanoate ester + H2O = an aliphatic alcohol + octadecanoate + H(+). It carries out the reaction 1-butyrylglycerol + H2O = butanoate + glycerol + H(+). The enzyme catalyses 1,2,3-tributanoylglycerol + H2O = dibutanoylglycerol + butanoate + H(+). With respect to regulation, PE domain down-regulates lipase activity. Its activity is regulated as follows. Cleavage by PecA does not affect surface localization and lipase activity. Inhibited by diethyl-p-nitrophenyl phosphate (E-600) at 0.5 uM, by phenylmethanesulfonyl fluoride at 5 mM and by polyethylene glycol sorbitan monolaurate (Tween 20). Also inhibited by CaCl(2), CoCl(2), MnCl(2), ZnCl(2) and MgCl(2). Inhibited by several hydrazides compounds. Stimulated slightly by SDS at concentrations up to 2 mM, above which the activity is severely inhibited. Catalyzes the hydrolysis of both intracellular and extracellular triacylglycerol (TAG). In vitro, can also hydrolyze p-nitrophenyl (pNP) esters with various chain lengths, including pNP-acetate (C2), pNP-butyrate (C4), pNP-caproate (C6), pNP-caprylate (C8), pNP-laurate (C12), pNP-myristate (C14), pNP-palmitate (C16) and pNP-stearate (C18). Also hydrolyzes monobutyrin, tributyrin and trioctanoin. Overexpression results in increase of virulence characterized by reduced survival of infected mouse and increased burden of bacilli in the lungs. Hydrolyzes internal or host-derived TAG depending on its localization. Functionally, hydrolyzes TAG that accumulates within mycobacterial intracytosolic lipid inclusions (ILI). Probably responsible for the utilization of stored long-chain TAG during the dormancy and reactivation stages of the pathogen. In terms of biological role, hydrolyzes host-derived TAG. This Mycobacterium tuberculosis (strain ATCC 25618 / H37Rv) protein is Triacylglycerol lipase.